Here is an 82-residue protein sequence, read N- to C-terminus: Exodeoxyribonuclease 7 small subunit (82 aa).

The protein belongs to the XseB family. As to quaternary structure, heterooligomer composed of large and small subunits.

Its subcellular location is the cytoplasm. The catalysed reaction is Exonucleolytic cleavage in either 5'- to 3'- or 3'- to 5'-direction to yield nucleoside 5'-phosphates.. In terms of biological role, bidirectionally degrades single-stranded DNA into large acid-insoluble oligonucleotides, which are then degraded further into small acid-soluble oligonucleotides. In Mannheimia succiniciproducens (strain KCTC 0769BP / MBEL55E), this protein is Exodeoxyribonuclease 7 small subunit.